A 1410-amino-acid chain; its full sequence is Pogo transposable element with ZNF domain (1410 aa).

The disordered stretch occupies residues 238–291; the sequence is RSTVPQSQSQQTKSTPSTSTTPTATQPTSLGQLAVQSPGQSNQTTNPKLAPSFP. Residues 239-266 show a composition bias toward low complexity; sequence STVPQSQSQQTKSTPSTSTTPTATQPTS. The span at 267-284 shows a compositional bias: polar residues; it reads LGQLAVQSPGQSNQTTNP. A Glycyl lysine isopeptide (Lys-Gly) (interchain with G-Cter in SUMO2) cross-link involves residue Lys-319. The interval 332–361 is disordered; it reads QSPGPVVVSNNSSAHGSQRTSGPESSMKVT. Residue Ser-333 is modified to Phosphoserine. A compositionally biased stretch (polar residues) spans 345 to 361; sequence AHGSQRTSGPESSMKVT. Residue Lys-359 forms a Glycyl lysine isopeptide (Lys-Gly) (interchain with G-Cter in SUMO2) linkage. Residue Ser-363 is modified to Phosphoserine. The C2H2-type 1; atypical zinc finger occupies 375–397; sequence KICPRCNAQFRVTEALRGHMCYC. The tract at residues 409–456 is disordered; that stretch reads KSLDSEPSVPSAAKPPSPEKTAPVASTPSSTPIPALSPPTKVPEPNEN. Lys-422 participates in a covalent cross-link: Glycyl lysine isopeptide (Lys-Gly) (interchain with G-Cter in SUMO2). Ser-425 is subject to Phosphoserine. A Phosphothreonine modification is found at Thr-439. A Phosphoserine modification is found at Ser-445. A Glycyl lysine isopeptide (Lys-Gly) (interchain with G-Cter in SUMO2) cross-link involves residue Lys-449. Position 463 is a phosphothreonine (Thr-463). Lys-489 is covalently cross-linked (Glycyl lysine isopeptide (Lys-Gly) (interchain with G-Cter in SUMO2)). 6 consecutive C2H2-type zinc fingers follow at residues 494-516, 530-553, 560-583, 590-613, 619-641, and 647-670; these read FRCPHCTKRLKNNIRFMNHMKHH, TICQHCYRQFSTPFQLQCHLENVH, TKCKICEWAFESEPLFLQHMKDTH, YVCQVCQYRSSLYSEVDVHFRMIH, LLCPYCLKVFKNGNAFQQHYMRH, and YHCNKCRLQFLFAKDKIEHKLQHH. Residue Lys-629 forms a Glycyl lysine isopeptide (Lys-Gly) (interchain with G-Cter in SUMO2) linkage. Residue Lys-677 forms a Glycyl lysine isopeptide (Lys-Gly) (interchain with G-Cter in SUMO2) linkage. The interval 693-715 is disordered; that stretch reads SRGQPRTVPVSSNDTPPSALQEA. The segment covering 701-710 has biased composition (polar residues); the sequence is PVSSNDTPPS. The segment at 771–794 adopts a C2H2-type 8 zinc-finger fold; sequence VHCSLCRYSTCCSRAYANHMINNH. Lys-801 participates in a covalent cross-link: Glycyl lysine isopeptide (Lys-Gly) (interchain with G-Cter in SUMO2). The interval 810–850 is required for interaction with CBX5; it reads VSGIKLACTSCTFVTSVGDAMAKHLVFNPSHRSSSILPRGL. The C2H2-type 9 zinc finger occupies 815 to 840; it reads LACTSCTFVTSVGDAMAKHLVFNPSH. Ser-856 bears the Phosphoserine mark. Disordered regions lie at residues 857–927 and 942–969; these read RHGQ…PQAL and VDDQDEGSPVTQEPELASGGGGSGGVGK. A compositionally biased stretch (basic and acidic residues) spans 860-870; sequence QTRDRVHDRNV. A Glycyl lysine isopeptide (Lys-Gly) (interchain with G-Cter in SUMO2) cross-link involves residue Lys-883. The segment covering 892–915 has biased composition (low complexity); it reads ATPAEPEELLTPLAPALPSPASTA. The HTH CENPB-type domain maps to 1015–1085; it reads GENLEGKYLS…MLRHHLTPHA (71 aa). The region spanning 1117–1323 is the DDE-1 domain; that stretch reads LPLSMIVAID…DCPELVQRSF (207 aa). Ser-1338 carries the phosphoserine modification. Residues 1340-1360 are a coiled coil; the sequence is TRNADMQEELIASLEEQLKLS. The segment at 1360–1400 is disordered; it reads SGEHSESSTPRPRSSPEETIEPESLHQLFEGESETESFYGF. Ser-1364 and Ser-1367 each carry phosphoserine. Phosphothreonine is present on Thr-1368. 2 positions are modified to phosphoserine: Ser-1373 and Ser-1374. Thr-1378 carries the phosphothreonine modification. The short motif at 1380–1404 is the Integrase domain-binding motif (IBM) element; it reads EPESLHQLFEGESETESFYGFEEAD. Phosphoserine; by CK2 is present on Ser-1392. Thr-1394 is modified (phosphothreonine). Phosphoserine; by CK2 is present on Ser-1396.

As to quaternary structure, interacts with CBX1, CBX3, MAD2L2 and CHAMP1. Interacts with CBX5; POGZ competes with PXVXL motif-containing proteins such as INCENP and TRIM28 for interaction with CBX5. Interacts (via IBM motif) with PSIP1 isoform 1 (via IBD domain); phosphorylation increases its affinity for PSIP1. Interacts with HDGFL2. Post-translationally, phosphorylation increases its interaction with PSIP1.

The protein resides in the nucleus. It is found in the chromosome. It localises to the cytoplasm. Plays a role in mitotic cell cycle progression and is involved in kinetochore assembly and mitotic sister chromatid cohesion. Probably through its association with CBX5 plays a role in mitotic chromosome segregation by regulating aurora kinase B/AURKB activation and AURKB and CBX5 dissociation from chromosome arms. Promotes the repair of DNA double-strand breaks through the homologous recombination pathway. This is Pogo transposable element with ZNF domain (POGZ) from Homo sapiens (Human).